A 470-amino-acid chain; its full sequence is Acetyl-CoA decarbonylase/synthase complex subunit beta 2 (470 aa).

Residues Cys190, Cys193, Cys279, and Cys281 each contribute to the [Ni-Fe-S] cluster site.

The protein belongs to the CdhC family. In terms of assembly, monomer. The ACDS complex is made up of alpha, epsilon, beta, gamma and delta chains with a probable stoichiometry of (alpha(2)epsilon(2))(4)-beta(8)-(gamma(1)delta(1))(8) (Potential). [Ni-Fe-S] cluster is required as a cofactor.

It carries out the reaction Co(I)-[corrinoid Fe-S protein] + acetyl-CoA + H(+) = methyl-Co(III)-[corrinoid Fe-S protein] + CO + CoA. It functions in the pathway one-carbon metabolism; methanogenesis from acetate. Its function is as follows. Part of a complex that catalyzes the reversible cleavage of acetyl-CoA, allowing growth on acetate as sole source of carbon and energy. The alpha-epsilon complex generates CO from CO(2), while the beta subunit (this protein) combines the CO with CoA and a methyl group to form acetyl-CoA. The methyl group, which is incorporated into acetyl-CoA, is transferred to the beta subunit by a corrinoid iron-sulfur protein (the gamma-delta complex). The chain is Acetyl-CoA decarbonylase/synthase complex subunit beta 2 (cdhC2) from Methanosarcina mazei (strain ATCC BAA-159 / DSM 3647 / Goe1 / Go1 / JCM 11833 / OCM 88) (Methanosarcina frisia).